Reading from the N-terminus, the 346-residue chain is Ketol-acid reductoisomerase (NADP(+)) (346 aa).

The KARI N-terminal Rossmann domain maps to 1-189 (MQVYYDRDAD…GGGRSGIIET (189 aa)). NADP(+) is bound by residues 24–27 (YGSQ), arginine 48, serine 51, threonine 53, and 83–86 (DEHQ). Histidine 108 is a catalytic residue. Position 134 (glycine 134) interacts with NADP(+). The KARI C-terminal knotted domain maps to 190–335 (TFKEECETDL…EKLRAMMPWI (146 aa)). 4 residues coordinate Mg(2+): aspartate 198, glutamate 202, glutamate 234, and glutamate 238. Residue serine 259 participates in substrate binding.

Belongs to the ketol-acid reductoisomerase family. It depends on Mg(2+) as a cofactor.

The catalysed reaction is (2R)-2,3-dihydroxy-3-methylbutanoate + NADP(+) = (2S)-2-acetolactate + NADPH + H(+). It carries out the reaction (2R,3R)-2,3-dihydroxy-3-methylpentanoate + NADP(+) = (S)-2-ethyl-2-hydroxy-3-oxobutanoate + NADPH + H(+). It participates in amino-acid biosynthesis; L-isoleucine biosynthesis; L-isoleucine from 2-oxobutanoate: step 2/4. Its pathway is amino-acid biosynthesis; L-valine biosynthesis; L-valine from pyruvate: step 2/4. Functionally, involved in the biosynthesis of branched-chain amino acids (BCAA). Catalyzes an alkyl-migration followed by a ketol-acid reduction of (S)-2-acetolactate (S2AL) to yield (R)-2,3-dihydroxy-isovalerate. In the isomerase reaction, S2AL is rearranged via a Mg-dependent methyl migration to produce 3-hydroxy-3-methyl-2-ketobutyrate (HMKB). In the reductase reaction, this 2-ketoacid undergoes a metal-dependent reduction by NADPH to yield (R)-2,3-dihydroxy-isovalerate. This chain is Ketol-acid reductoisomerase (NADP(+)), found in Sphingopyxis alaskensis (strain DSM 13593 / LMG 18877 / RB2256) (Sphingomonas alaskensis).